A 399-amino-acid polypeptide reads, in one-letter code: Phosphoprotein (399 aa).

Composition is skewed to polar residues over residues 30-46 (ATSQSSLNKPPSQSSRT) and 82-112 (GRQNLDSLSMISNKPQTGTLLMGSDTQLPSP). Residues 30-112 (ATSQSSLNKP…MGSDTQLPSP (83 aa)) form a disordered region. The interval 224-287 (NYASEILDAI…ITTMKIMDPG (64 aa)) is multimerization. Residues 226–253 (ASEILDAIKALEVRLDRIEGKVDKIMLT) are a coiled coil.

Belongs to the rubulavirus/avulavirus P protein family. Homotetramer. Interacts (via multimerization domain) with polymerase L; this interaction forms the polymerase L-P complex. Interacts (via N-terminus) with N0 (via Ncore); this interaction allows P to chaperon N0 to avoid N polymerization before encapsidation. Interacts (via C-terminus) with N-RNA template; this interaction positions the polymerase on the template for both transcription and replication.

Functionally, essential cofactor of the RNA polymerase L that plays a central role in the transcription and replication by forming the polymerase complex with RNA polymerase L and recruiting L to the genomic N-RNA template for RNA synthesis. Also plays a central role in the encapsidation of nascent RNA chains by forming the encapsidation complex with the nucleocapsid protein N (N-P complex). Acts as a chaperone for newly synthesized free N protein, so-called N0, allowing encapsidation of nascent RNA chains during replication. The nucleoprotein protein N prevents excessive phosphorylation of P, which leads to down-regulation of viral transcription/ replication. Participates, together with N, in the formation of viral factories (viroplasms), which are large inclusions in the host cytoplasm where replication takes place. The sequence is that of Phosphoprotein (P/V) from Human parainfluenza 4a virus (strain Toshiba) (HPIV-4a).